Here is a 179-residue protein sequence, read N- to C-terminus: Nicotinamide-nucleotide adenylyltransferase (179 aa).

It belongs to the archaeal NMN adenylyltransferase family.

It localises to the cytoplasm. The catalysed reaction is beta-nicotinamide D-ribonucleotide + ATP + H(+) = diphosphate + NAD(+). It functions in the pathway cofactor biosynthesis; NAD(+) biosynthesis; NAD(+) from nicotinamide D-ribonucleotide: step 1/1. This chain is Nicotinamide-nucleotide adenylyltransferase, found in Thermoplasma acidophilum (strain ATCC 25905 / DSM 1728 / JCM 9062 / NBRC 15155 / AMRC-C165).